We begin with the raw amino-acid sequence, 143 residues long: Photosystem I reaction center subunit IV A, chloroplastic (143 aa).

A chloroplast-targeting transit peptide spans 1–44 (MAMTTASTVFVLPANVTSVAGASSSRSSVSFLPMRNAGSRLVVR). Residues 43–85 (VRAAEDPAPASSSSKDSPAAAAAPDGATATKPKPPPIGPKRGS) form a disordered region. The span at 48-73 (DPAPASSSSKDSPAAAAAPDGATATK) shows a compositional bias: low complexity.

Belongs to the PsaE family. In terms of processing, 2 isoforms may exist. With or without the N-terminal alanine.

Its subcellular location is the plastid. It localises to the chloroplast thylakoid membrane. In terms of biological role, stabilizes the interaction between PsaC and the PSI core, assists the docking of the ferredoxin to PSI and interacts with ferredoxin-NADP oxidoreductase. This chain is Photosystem I reaction center subunit IV A, chloroplastic (PSAE1), found in Arabidopsis thaliana (Mouse-ear cress).